Reading from the N-terminus, the 452-residue chain is Imidazoleglycerol-phosphate dehydratase (452 aa).

Positions methionine 1 to glycine 233 are unknown activity. An imidazoleglycerol-phosphate dehydratase region spans residues leucine 234–alanine 452.

It belongs to the imidazoleglycerol-phosphate dehydratase family.

It carries out the reaction D-erythro-1-(imidazol-4-yl)glycerol 3-phosphate = 3-(imidazol-4-yl)-2-oxopropyl phosphate + H2O. The protein operates within amino-acid biosynthesis; L-histidine biosynthesis; L-histidine from 5-phospho-alpha-D-ribose 1-diphosphate: step 6/9. This chain is Imidazoleglycerol-phosphate dehydratase (HIS3), found in Phytophthora nicotianae (Potato buckeye rot agent).